Here is a 91-residue protein sequence, read N- to C-terminus: Small ribosomal subunit protein uS17 (91 aa).

It belongs to the universal ribosomal protein uS17 family. In terms of assembly, part of the 30S ribosomal subunit.

Its function is as follows. One of the primary rRNA binding proteins, it binds specifically to the 5'-end of 16S ribosomal RNA. The protein is Small ribosomal subunit protein uS17 of Saccharopolyspora erythraea (strain ATCC 11635 / DSM 40517 / JCM 4748 / NBRC 13426 / NCIMB 8594 / NRRL 2338).